A 238-amino-acid chain; its full sequence is Thrombin-like enzyme halystase (238 aa).

A Peptidase S1 domain is found at 1 to 229; sequence IIGGDECNIN…HLDWIKSIIA (229 aa). 6 cysteine pairs are disulfide-bonded: C7/C141, C28/C44, C76/C236, C120/C190, C152/C169, and C180/C205. H43 serves as the catalytic Charge relay system. N81 carries an N-linked (GlcNAc...) asparagine glycan. D88 acts as the Charge relay system in catalysis. N100 carries N-linked (GlcNAc...) asparagine glycosylation. S184 (charge relay system) is an active-site residue.

This sequence belongs to the peptidase S1 family. Snake venom subfamily. Monomer. As to expression, expressed by the venom gland.

It localises to the secreted. Its activity is regulated as follows. Inhibited by diisopropylfluorophosphate (DFP), PMSF and leupeptin. Functionally, thrombin-like snake venom serine protease. Cleaves fibrinogen (beta chain of fibrinogen (FGB) and more slowly alpha chain (FGA)) without inducing fibrin clotting and cleaves kininogen to produce bradykinin (KNG), resulting in the reduction of blood pressure. This chain is Thrombin-like enzyme halystase, found in Gloydius blomhoffii (Mamushi).